Consider the following 392-residue polypeptide: F-box only protein 5-A (392 aa).

Residues 1 to 21 (MMCGFASNQSPKKLSSKKSSA) are disordered. Residues 7-20 (SNQSPKKLSSKKSS) are compositionally biased toward low complexity. The region spanning 197–244 (AELFHRDFKHLLTKILRHLSAMDLINVISVSTTWRKLLQKDNWAYNAY) is the F-box domain. The ZBR-type zinc-finger motif lies at 319–367 (SLKVCVDCGSPAKHDPCLHRAICTRESCKLDFCTRCSCKYHFSKSCLMS). Cysteine 323, cysteine 326, cysteine 341, cysteine 346, cysteine 351, cysteine 354, histidine 359, and cysteine 364 together coordinate Zn(2+).

As to quaternary structure, part of a SCF (SKP1-cullin-F-box) protein ligase complex. Interacts with btrc. Interacts with skp1. Interacts with cdc20. Interacts with pin1; stabilizes fbxo5 by preventing its association with btrc in an isomerization-dependent pathway; this interaction is present during G2 phase and prevents fbxo5 degradation. Interacts with plk1. In terms of processing, proteolysed; proteolysis is induced by both cyclin B-cdk1 and cyclin A-cdk1/2 complex through probable phosphorylation. Proteolysis is inhibited by pin1 during G2.

It is found in the nucleus. The protein resides in the cytoplasm. It localises to the cytoskeleton. The protein localises to the spindle. Its subcellular location is the microtubule organizing center. It is found in the centrosome. It functions in the pathway protein modification; protein ubiquitination. In terms of biological role, regulates progression through early mitosis by inhibiting the anaphase promoting complex/cyclosome (APC). Binds to the APC activator cdc20 to prevent APC activation. Can also bind directly to the APC to inhibit substrate-binding. Required to arrest unfertilized eggs at metaphase of meiosis II, by preventing their release from metaphase of meiosis II, through inhibition of APC-dependent cyclin B destruction leading to stabilization of cyclin B-cdk1 complex activity. The polypeptide is F-box only protein 5-A (fbxo5-a) (Xenopus laevis (African clawed frog)).